We begin with the raw amino-acid sequence, 606 residues long: Lysosomal cobalamin transporter ABCD4 (606 aa).

An ABC transmembrane type-1 domain is found at 39-332 (NALMFLTLLC…CFTQLIDLST (294 aa)). Transmembrane regions (helical) follow at residues 43–63 (FLTL…VGLI), 76–96 (LEGF…NSTL), 190–210 (IFGY…PIVM), 279–299 (YLGS…GVYG), and 314–334 (AFVC…STTL). Residues 389 to 603 (LERVSISAPS…GGGRWELMRI (215 aa)) form the ABC transporter domain. 421–428 (GNTGTGKT) is a binding site for ATP.

It belongs to the ABC transporter superfamily. ABCD family. Peroxisomal fatty acyl CoA transporter (TC 3.A.1.203) subfamily. Homodimer or heterodimer. Interacts with LMBRD1; this interaction induces the translocation of ABCD4 from the ER to the lysosome membrane. Interacts with LMBRD1 and MMACHC; this interaction ensures the transport of cobalamin from the lysosome to the cytosol. As to expression, ubiquitous.

Its subcellular location is the endoplasmic reticulum membrane. The protein resides in the lysosome membrane. It catalyses the reaction an R-cob(III)alamin(out) + ATP + H2O = an R-cob(III)alamin(in) + ADP + phosphate + H(+). Functionally, lysosomal membrane protein that transports cobalamin (Vitamin B12) from the lysosomal lumen to the cytosol in an ATP-dependent manner. Targeted by LMBRD1 lysosomal chaperone from the endoplasmic reticulum to the lysosomal membrane. Then forms a complex with lysosomal chaperone LMBRD1 and cytosolic MMACHC to transport cobalamin across the lysosomal membrane. The polypeptide is Lysosomal cobalamin transporter ABCD4 (Homo sapiens (Human)).